Reading from the N-terminus, the 100-residue chain is Large ribosomal subunit protein bL21 (100 aa).

It belongs to the bacterial ribosomal protein bL21 family. In terms of assembly, part of the 50S ribosomal subunit. Contacts protein L20.

Functionally, this protein binds to 23S rRNA in the presence of protein L20. The polypeptide is Large ribosomal subunit protein bL21 (Ureaplasma parvum serovar 3 (strain ATCC 27815 / 27 / NCTC 11736)).